A 266-amino-acid chain; its full sequence is Glucosamine-6-phosphate deaminase (266 aa).

Catalysis depends on aspartate 72, which acts as the Proton acceptor; for enolization step. Aspartate 141 (for ring-opening step) is an active-site residue. Histidine 143 functions as the Proton acceptor; for ring-opening step in the catalytic mechanism. Glutamate 148 serves as the catalytic For ring-opening step.

Belongs to the glucosamine/galactosamine-6-phosphate isomerase family. NagB subfamily. In terms of assembly, homohexamer.

The enzyme catalyses alpha-D-glucosamine 6-phosphate + H2O = beta-D-fructose 6-phosphate + NH4(+). The protein operates within amino-sugar metabolism; N-acetylneuraminate degradation; D-fructose 6-phosphate from N-acetylneuraminate: step 5/5. With respect to regulation, allosterically activated by N-acetylglucosamine 6-phosphate (GlcNAc6P). In terms of biological role, catalyzes the reversible isomerization-deamination of glucosamine 6-phosphate (GlcN6P) to form fructose 6-phosphate (Fru6P) and ammonium ion. This is Glucosamine-6-phosphate deaminase from Vibrio vulnificus (strain CMCP6).